Consider the following 733-residue polypeptide: SWR1-complex protein 4 (733 aa).

Disordered stretches follow at residues Met-1–Leu-34 and Pro-98–Phe-128. An SANT domain is found at Asn-146 to Ala-217. Residues Lys-247 to Asp-299 adopt a coiled-coil conformation. Residues Ala-371 to Ala-384 are compositionally biased toward low complexity. Disordered regions lie at residues Ala-371–Pro-488 and Lys-564–Lys-733. Composition is skewed to basic and acidic residues over residues Asn-387–Gly-423, Pro-463–Leu-484, Lys-564–Glu-589, and Asp-610–Glu-653. The segment covering Gly-699–Ala-710 has biased composition (low complexity).

This sequence belongs to the SWC4 family. In terms of assembly, component of the SWR1 chromatin-remodeling complex and of the NuA4 histone acetyltransferase complex.

It localises to the nucleus. In terms of biological role, component of the SWR1 complex which mediates the ATP-dependent exchange of histone H2A for the H2A variant H2A.Z leading to transcriptional regulation of selected genes by chromatin remodeling. Component of the NuA4 histone acetyltransferase complex which is involved in transcriptional activation of selected genes principally by acetylation of nucleosomal histone H4 and H2A. The NuA4 complex is also involved in DNA repair. In Neurospora crassa (strain ATCC 24698 / 74-OR23-1A / CBS 708.71 / DSM 1257 / FGSC 987), this protein is SWR1-complex protein 4 (crc-1).